Reading from the N-terminus, the 149-residue chain is Acyl carrier protein 1, chloroplastic (149 aa).

Residues 1 to 59 constitute a chloroplast transit peptide; it reads MAHCLAAVSSFSPSAVRRRLSSQVANVVSSRSSVSFHSRQMSFVSISSRPSSLRFKICC. In terms of domain architecture, Carrier spans 69-144; it reads KETVDKVCMI…DAANLIEKLV (76 aa). Ser-104 carries the O-(pantetheine 4'-phosphoryl)serine modification.

The protein belongs to the acyl carrier protein (ACP) family. Post-translationally, 4'-phosphopantetheine is transferred from CoA to a specific serine of apo-ACP by acpS. This modification is essential for activity because fatty acids are bound in thioester linkage to the sulfhydryl of the prosthetic group.

The protein localises to the plastid. Its subcellular location is the chloroplast. Its pathway is lipid metabolism; fatty acid biosynthesis. Carrier of the growing fatty acid chain in fatty acid biosynthesis. This chain is Acyl carrier protein 1, chloroplastic (ACL1.1), found in Hordeum vulgare (Barley).